A 270-amino-acid polypeptide reads, in one-letter code: Fibroblast growth factor 5 (270 aa).

An N-terminal signal peptide occupies residues 1–20 (MSLSFLLLLFLSHLILSAWA). A disordered region spans residues 25–86 (RLAPKGQPGP…EQSSFQWSPS (62 aa)). The segment covering 41–69 (PGGASSRRSSSSTATSSSSPASSSSAASR) has biased composition (low complexity). Positions 76 to 86 (LEQSSFQWSPS) are enriched in polar residues. Asparagine 112 carries N-linked (GlcNAc...) asparagine glycosylation. Residues 237 to 257 (EKKKPPNPVKPKVPLSAPRRS) are disordered.

This sequence belongs to the heparin-binding growth factors family. In terms of assembly, interacts with FGFR1 and FGFR2. Affinity between fibroblast growth factors (FGFs) and their receptors is increased by heparan sulfate glycosaminoglycans that function as coreceptors.

The protein resides in the secreted. Functionally, plays an important role in the regulation of cell proliferation and cell differentiation. Required for normal regulation of the hair growth cycle. Functions as an inhibitor of hair elongation by promoting progression from anagen, the growth phase of the hair follicle, into catagen the apoptosis-induced regression phase. This Bos taurus (Bovine) protein is Fibroblast growth factor 5 (FGF5).